Here is a 201-residue protein sequence, read N- to C-terminus: UPF0301 protein ROP_34500 (201 aa).

Belongs to the UPF0301 (AlgH) family.

This is UPF0301 protein ROP_34500 from Rhodococcus opacus (strain B4).